We begin with the raw amino-acid sequence, 400 residues long: Argininosuccinate synthase (400 aa).

Position 9–17 (9–17 (AYSGGLDTS)) interacts with ATP. Tyr-87 is a binding site for L-citrulline. Residue Gly-117 participates in ATP binding. L-aspartate-binding residues include Thr-119, Asn-123, and Asp-124. Asn-123 contributes to the L-citrulline binding site. L-citrulline contacts are provided by Arg-127, Ser-176, Ser-185, Glu-261, and Tyr-273.

This sequence belongs to the argininosuccinate synthase family. Type 1 subfamily. As to quaternary structure, homotetramer.

The protein resides in the cytoplasm. It catalyses the reaction L-citrulline + L-aspartate + ATP = 2-(N(omega)-L-arginino)succinate + AMP + diphosphate + H(+). Its pathway is amino-acid biosynthesis; L-arginine biosynthesis; L-arginine from L-ornithine and carbamoyl phosphate: step 2/3. This Chlorobium luteolum (strain DSM 273 / BCRC 81028 / 2530) (Pelodictyon luteolum) protein is Argininosuccinate synthase.